A 385-amino-acid polypeptide reads, in one-letter code: Sulfoquinovose monooxygenase (385 aa).

The interval 366-385 (AYGRVPSETPATPLGNGERH) is disordered.

It belongs to the SsuD family. As to quaternary structure, homodimer.

It catalyses the reaction 6-sulfo-D-quinovose + FMNH2 + O2 = 6-dehydro-D-glucose + FMN + sulfite + H2O + 2 H(+). In terms of biological role, part of the sulfoquinovose monooxygenase (sulfo-SMO) pathway, a D-sulfoquinovose degradation pathway that enables the complete utilization of all carbons within sulfoquinovose (SQ) with concomitant production of inorganic sulfite. Catalyzes the oxidative desulfurization of sulfoquinovose to sulfite and 6-dehydro-D-glucose. Is highly specific for sulfoquinovose and cannot use sulfoquinovosyl glycerol. FMNH(2) is provided by the FMN reductase SmoA. This Agrobacterium fabrum (strain C58 / ATCC 33970) (Agrobacterium tumefaciens (strain C58)) protein is Sulfoquinovose monooxygenase.